Consider the following 84-residue polypeptide: Metallothionein type 2b (84 aa).

The protein belongs to the metallothionein superfamily. Type 15 family. As to expression, expressed in leaves, stems and roots.

The protein resides in the cytoplasm. The protein localises to the nucleus. In terms of biological role, metallothioneins have a high content of cysteine residues that bind various heavy metals. Probably involved in maintaining homeostasis of essential transition metals and detoxification of toxic metals. Increases cadmium and zinc tolerance when expressed in heterologous systems. Metal chelator binding 6 cadmium or 5 zinc atoms per protein. This chain is Metallothionein type 2b, found in Colocasia esculenta (Wild taro).